Consider the following 177-residue polypeptide: Translation initiation factor IF-3 (177 aa).

It belongs to the IF-3 family. In terms of assembly, monomer.

Its subcellular location is the cytoplasm. In terms of biological role, IF-3 binds to the 30S ribosomal subunit and shifts the equilibrium between 70S ribosomes and their 50S and 30S subunits in favor of the free subunits, thus enhancing the availability of 30S subunits on which protein synthesis initiation begins. The polypeptide is Translation initiation factor IF-3 (Elusimicrobium minutum (strain Pei191)).